The primary structure comprises 130 residues: Phosphomevalonate dehydratase small subunit (130 aa).

Ser-62 functions as the Proton acceptor in the catalytic mechanism.

This sequence belongs to the AcnX type II small subunit family. In terms of assembly, heterodimer composed of a large subunit (PMDh-L) and a small subunit (PMDh-S).

It catalyses the reaction (R)-5-phosphomevalonate = (2E)-3-methyl-5-phosphooxypent-2-enoate + H2O. Its pathway is isoprenoid biosynthesis; isopentenyl diphosphate biosynthesis via mevalonate pathway. Component of a hydro-lyase that catalyzes the dehydration of mevalonate 5-phosphate (MVA5P) to form trans-anhydromevalonate 5-phosphate (tAHMP). Involved in the archaeal mevalonate (MVA) pathway, which provides fundamental precursors for isoprenoid biosynthesis, such as isopentenyl diphosphate (IPP) and dimethylallyl diphosphate (DMAPP). This Thermococcus onnurineus (strain NA1) protein is Phosphomevalonate dehydratase small subunit.